A 177-amino-acid chain; its full sequence is Probable inosine/xanthosine triphosphatase (177 aa).

The protein belongs to the YjjX NTPase family. In terms of assembly, homodimer. Mg(2+) is required as a cofactor. Mn(2+) serves as cofactor.

It carries out the reaction XTP + H2O = XDP + phosphate + H(+). The catalysed reaction is ITP + H2O = IDP + phosphate + H(+). In terms of biological role, phosphatase that hydrolyzes non-canonical purine nucleotides such as XTP and ITP to their respective diphosphate derivatives. Probably excludes non-canonical purines from DNA/RNA precursor pool, thus preventing their incorporation into DNA/RNA and avoiding chromosomal lesions. In Pyrobaculum arsenaticum (strain DSM 13514 / JCM 11321 / PZ6), this protein is Probable inosine/xanthosine triphosphatase.